Here is a 1171-residue protein sequence, read N- to C-terminus: Topoisomerase 1-associated factor 1 (1171 aa).

Disordered regions lie at residues Arg568–Thr592 and Pro880–Ser1171. Residues Val887–Thr910 are compositionally biased toward basic and acidic residues. The span at Ala938–Arg950 shows a compositional bias: basic residues. The segment covering Asp954–Val964 has biased composition (acidic residues). The segment covering Leu965–Asp993 has biased composition (basic and acidic residues). The segment covering Thr1033–Lys1048 has biased composition (basic residues). Over residues Gly1085–Asp1100 the composition is skewed to polar residues.

Belongs to the timeless family. In terms of assembly, component of the fork protection complex (FPC) consisting of TOF1 and CSM3.

It is found in the nucleus. In terms of biological role, forms a fork protection complex (FPC) with CSM3 and which is required for chromosome segregation during meiosis and DNA damage repair. FPC coordinates leading and lagging strand synthesis and moves with the replication fork. FPC stabilizes replication forks in a configuration that is recognized by replication checkpoint sensors. The polypeptide is Topoisomerase 1-associated factor 1 (TOF1) (Coccidioides immitis (strain RS) (Valley fever fungus)).